A 2235-amino-acid polypeptide reads, in one-letter code: Bridge-like lipid transfer protein family member 2 (2235 aa).

Positions 1–31 (MPLFFSALLVLLLVALSALFLGRWLVVRLAT) are cleaved as a signal peptide. The transmembrane domain stretch occupies residues 29–108 (LATKWCQRKL…LQKVSDLSAP (80 aa)). A Phosphoserine modification is found at Ser563. Residue Asn730 is glycosylated (N-linked (GlcNAc...) asparagine). The interval 1495 to 1529 (PQMPAKKPKRGVPTSASAPPRVNTPSFSGQPDKGS) is disordered. The stretch at 1813-1885 (SILHLQEAVR…LNILIRCFKD (73 aa)) forms a coiled coil. Phosphoserine occurs at positions 1846, 2090, and 2094. Residues 2074–2099 (GKGVAQGLTRSSGVRRSFRKSPEHPV) form a disordered region.

Belongs to the SABRE family. In terms of tissue distribution, expressed in pancreas, placenta and up-regulated in breast carcinoma epithelial cells, ductal in situ carcinoma (DCIS), invasive breast carcinoma (IBC) and metastatic breast carcinoma cells (MET).

The protein resides in the cell membrane. It localises to the endoplasmic reticulum membrane. Its subcellular location is the mitochondrion membrane. Functionally, tube-forming lipid transport protein which binds to phosphatidylinositols and affects phosphatidylinositol-4,5-bisphosphate (PtdIns-4,5-P2) distribution. The protein is Bridge-like lipid transfer protein family member 2 of Homo sapiens (Human).